The chain runs to 160 residues: tRNA (cytidine(56)-2'-O)-methyltransferase (160 aa).

Residues L68, 94–98 (GAEKV), and 112–119 (IGNQPHSE) each bind S-adenosyl-L-methionine.

The protein belongs to the aTrm56 family. In terms of assembly, homodimer.

It localises to the cytoplasm. It catalyses the reaction cytidine(56) in tRNA + S-adenosyl-L-methionine = 2'-O-methylcytidine(56) in tRNA + S-adenosyl-L-homocysteine + H(+). In terms of biological role, specifically catalyzes the AdoMet-dependent 2'-O-ribose methylation of cytidine at position 56 in tRNAs. In Saccharolobus solfataricus (strain ATCC 35092 / DSM 1617 / JCM 11322 / P2) (Sulfolobus solfataricus), this protein is tRNA (cytidine(56)-2'-O)-methyltransferase.